Here is a 235-residue protein sequence, read N- to C-terminus: Small ribosomal subunit protein uS3 (235 aa).

Residues 39 to 107 (VRLFLRKELF…PTQINIAEIR (69 aa)) form the KH type-2 domain.

Belongs to the universal ribosomal protein uS3 family. As to quaternary structure, part of the 30S ribosomal subunit. Forms a tight complex with proteins S10 and S14.

Functionally, binds the lower part of the 30S subunit head. Binds mRNA in the 70S ribosome, positioning it for translation. The sequence is that of Small ribosomal subunit protein uS3 from Buchnera aphidicola subsp. Baizongia pistaciae (strain Bp).